The primary structure comprises 485 residues: MEYKLVIGLEIHIQLGLKTKAFCGCKNEFGGVPNSRICPICLGLPGSLPSVNVELINSAILAGHATNSKIRRVVKFDRKHYYYPDLPKGYQISQNDKPICEGGSLLIETPSGFKKINIIRIHMEEDSGKSLHLLDSENQSYIDFNRSGAPLLEIVSAPDIGNGDEAVAFLSSLREIFRYLDLSECNMENGSFRCDVNVNLIVNESGIEYKTPIAEIKNLNSFKSIKAAIEYEELRQQEEWIQFRKTLDSCGKHTRGFDDKSGITVIQRNKETVSDYRYFQEPDLPLIEIDDFYIDNIKNLKLIELPFDARVRLKAQYGLSDFDVTTLTSDKHLLRYFEDAVINSSDPKKVANWILSEVLSVLNDKGISVLEFNLLPSHITELVEFIVADKISGKMAKKVFSEMMARKVPASVIISENQLEQISDEFVIKQIVLEVLNENPKSIELYKKGKDHAIKFMMGQIMKKSSGKINPILANEILLQSLANV.

It belongs to the GatB/GatE family. GatB subfamily. In terms of assembly, heterotrimer of A, B and C subunits.

It carries out the reaction L-glutamyl-tRNA(Gln) + L-glutamine + ATP + H2O = L-glutaminyl-tRNA(Gln) + L-glutamate + ADP + phosphate + H(+). The catalysed reaction is L-aspartyl-tRNA(Asn) + L-glutamine + ATP + H2O = L-asparaginyl-tRNA(Asn) + L-glutamate + ADP + phosphate + 2 H(+). Its function is as follows. Allows the formation of correctly charged Asn-tRNA(Asn) or Gln-tRNA(Gln) through the transamidation of misacylated Asp-tRNA(Asn) or Glu-tRNA(Gln) in organisms which lack either or both of asparaginyl-tRNA or glutaminyl-tRNA synthetases. The reaction takes place in the presence of glutamine and ATP through an activated phospho-Asp-tRNA(Asn) or phospho-Glu-tRNA(Gln). In Borreliella afzelii (strain PKo) (Borrelia afzelii), this protein is Aspartyl/glutamyl-tRNA(Asn/Gln) amidotransferase subunit B.